Here is a 253-residue protein sequence, read N- to C-terminus: uncharacterized protein (253 aa).

This is an uncharacterized protein from Bacillus subtilis (strain 168).